The chain runs to 224 residues: Putative cobalt transport protein CbiM (224 aa).

6 consecutive transmembrane segments (helical) span residues L8–I28, A41–P61, F75–F95, L108–L128, E138–I158, and F169–I189.

This sequence belongs to the CbiM family. As to quaternary structure, forms an energy-coupling factor (ECF) transporter complex composed of an ATP-binding protein (A component, CbiO), a transmembrane protein (T component, CbiQ) and 2 possible substrate-capture proteins (S components, CbiM and CbiN) of unknown stoichimetry.

It is found in the cell membrane. Its pathway is cofactor biosynthesis; adenosylcobalamin biosynthesis. Functionally, part of the energy-coupling factor (ECF) transporter complex CbiMNOQ involved in cobalt import. The polypeptide is Putative cobalt transport protein CbiM (Methanosphaera stadtmanae (strain ATCC 43021 / DSM 3091 / JCM 11832 / MCB-3)).